We begin with the raw amino-acid sequence, 439 residues long: Sodium-dependent phosphate transport protein 3 (439 aa).

Residues N47, N56, N68, and N69 are each glycosylated (N-linked (GlcNAc...) asparagine). Transmembrane regions (helical) follow at residues 98-118, 130-150, 183-203, 211-231, 273-293, 317-337, 350-369, 374-396, and 415-435; these read INYGIILTLIPSGYLAGIFGA, SLLTLFTPLAADFGVILVIMV, TIAGSGSAFGSFIILCVGGLI, FIFYIFGSTGCVCCLLWFTVI, LPLWAIFLGFFSHFWLCTIIL, LPFIAAASCTILGGQLADFLL, LFSSLGLLLPSICAVALPFV, VITIILLILIPGTSNLCDSGFII, and GFGLIAGIISSTATGFLISQV.

It belongs to the major facilitator superfamily. Sodium/anion cotransporter family. As to expression, expressed in the small intestine, kidney, spleen and testis. Not detected in fetal brain, bone marrow, and mammary gland.

Its subcellular location is the apical cell membrane. It carries out the reaction 3 Na(+)(out) + phosphate(out) = 3 Na(+)(in) + phosphate(in). The enzyme catalyses urate(out) + n chloride(in) = urate(in) + n chloride(out). In terms of biological role, acts as a membrane potential-dependent organic anion transporter, the transport requires a low concentration of chloride ions. Mediates chloride-dependent transport of urate. Can actively transport inorganic phosphate into cells via Na(+) cotransport. The protein is Sodium-dependent phosphate transport protein 3 (SLC17A2) of Homo sapiens (Human).